Reading from the N-terminus, the 210-residue chain is MGISRDSIHKRRATGGKQKMWRKKRKYELGRQPANTKLSSNKTVRRIRVRGGNVKWRALRLDTGNFSWGSEAVTRKTRILDVAYNASNNELVRTQTLVKSAIVQVDAAPFKQGYLQHYGVDIGRKKKGEAVTTEEVKKSNHVQRKLEMRQEGRALDSHLEEQFSSGRLLACIASRPGQCGRADGYILEGKELEFYMKKLQKKKGKNAGAA.

The disordered stretch occupies residues 1 to 22 (MGISRDSIHKRRATGGKQKMWR). Over residues 8 to 22 (IHKRRATGGKQKMWR) the composition is skewed to basic residues.

Belongs to the eukaryotic ribosomal protein eS8 family.

This Arabidopsis thaliana (Mouse-ear cress) protein is Small ribosomal subunit protein eS8y (RPS8B).